The following is a 151-amino-acid chain: Secreted RxLR effector protein 30 (151 aa).

A signal peptide spans 1-19 (MRSSTILIVLGIAILAVNG). The RxLR-dEER motif lies at 38–53 (RLLRSTSTEHETDEER).

It belongs to the RxLR effector family.

The protein localises to the secreted. It is found in the host nucleus. Its function is as follows. Effector that acts as a broad suppressor of cell death to interrupt plant immunity. Inhibits cell death induced by cell death-inducing proteins, including the PAMP elicitor INF1 from P.infestans. The chain is Secreted RxLR effector protein 30 from Plasmopara viticola (Downy mildew of grapevine).